A 153-amino-acid polypeptide reads, in one-letter code: Ribosomal RNA large subunit methyltransferase H (153 aa).

S-adenosyl-L-methionine contacts are provided by residues leucine 70, glycine 102, and 121–126 (LSRMTF).

The protein belongs to the RNA methyltransferase RlmH family. Homodimer.

The protein localises to the cytoplasm. It catalyses the reaction pseudouridine(1915) in 23S rRNA + S-adenosyl-L-methionine = N(3)-methylpseudouridine(1915) in 23S rRNA + S-adenosyl-L-homocysteine + H(+). Functionally, specifically methylates the pseudouridine at position 1915 (m3Psi1915) in 23S rRNA. In Geotalea daltonii (strain DSM 22248 / JCM 15807 / FRC-32) (Geobacter daltonii), this protein is Ribosomal RNA large subunit methyltransferase H.